The primary structure comprises 388 residues: Succinate--CoA ligase [ADP-forming] subunit beta (388 aa).

Residues 9–244 (KQLFAEYGLP…PSQEDEREAH (236 aa)) form the ATP-grasp domain. Residues Lys46, 53 to 55 (GRG), Glu99, Ser102, and Glu107 each bind ATP. Mg(2+) contacts are provided by Asn199 and Asp213. Residues Asn264 and 321-323 (GIV) contribute to the substrate site.

This sequence belongs to the succinate/malate CoA ligase beta subunit family. As to quaternary structure, heterotetramer of two alpha and two beta subunits. Mg(2+) serves as cofactor.

It catalyses the reaction succinate + ATP + CoA = succinyl-CoA + ADP + phosphate. The enzyme catalyses GTP + succinate + CoA = succinyl-CoA + GDP + phosphate. It participates in carbohydrate metabolism; tricarboxylic acid cycle; succinate from succinyl-CoA (ligase route): step 1/1. Functionally, succinyl-CoA synthetase functions in the citric acid cycle (TCA), coupling the hydrolysis of succinyl-CoA to the synthesis of either ATP or GTP and thus represents the only step of substrate-level phosphorylation in the TCA. The beta subunit provides nucleotide specificity of the enzyme and binds the substrate succinate, while the binding sites for coenzyme A and phosphate are found in the alpha subunit. The chain is Succinate--CoA ligase [ADP-forming] subunit beta from Aliivibrio salmonicida (strain LFI1238) (Vibrio salmonicida (strain LFI1238)).